A 525-amino-acid polypeptide reads, in one-letter code: MSL complex subunit 3 (525 aa).

A Tudor-knot domain is found at 13–72; sequence SGEKVLCFEPDPTKARVLYDAKIIDVIIGKDEKGRKIPEYLIHFNGWNRSWDRWAAEEHV. 2 disordered regions span residues 119-148 and 302-383; these read KEKS…KEHR and TTTT…DTSA. A compositionally biased stretch (basic and acidic residues) spans 136 to 146; the sequence is SCGEKNGGIKE. The MRG domain maps to 172-521; the sequence is DERTITIDIP…CEAHYSTKNP (350 aa). The segment at 294 to 444 is required for the histone acetyltransferase activity of the MSL complex; sequence FFLPIKESTT…WKLVPDNYPP (151 aa). Ser313 and Ser315 each carry phosphoserine. The segment covering 320-332 has biased composition (low complexity); it reads NPSTPQSTESQPP. Residues Ser371 and Ser404 each carry the phosphoserine modification. Thr409 is modified (phosphothreonine). Residues Ser411 and Ser415 each carry the phosphoserine modification.

In terms of assembly, component of the MSL histone acetyltransferase complex at least composed of the KAT8/MOF, MSL1/hampin, MSL2 and MSL3. Interacts (via the MRG domain) with MSL1 and KAT8/MOF. In testis, expression is mostly restricted to the spermatocyte stage and only in a small portion of spermatogonia.

Its subcellular location is the nucleus. In terms of biological role, non-catalytic component of the MSL histone acetyltransferase complex, a multiprotein complex that mediates the majority of histone H4 acetylation at 'Lys-16' (H4K16ac), an epigenetic mark that prevents chromatin compaction. The MSL complex is required for chromosome stability and genome integrity by maintaining homeostatic levels of H4K16ac. The MSL complex is also involved in gene dosage by promoting up-regulation of genes expressed by the X chromosome. X up-regulation is required to compensate for autosomal biallelic expression. The MSL complex also participates in gene dosage compensation by promoting expression of Tsix non-coding RNA. Acts as a histone reader that specifically recognizes and binds histone H4 monomethylated at 'Lys-20' (H4K20Me1) in a DNA-dependent manner and is proposed to be involved in chromosomal targeting of the MSL complex. May play a role X inactivation in females. The polypeptide is MSL complex subunit 3 (Mus musculus (Mouse)).